The sequence spans 267 residues: Thiazole synthase (267 aa).

Residue Lys-107 is the Schiff-base intermediate with DXP of the active site. 1-deoxy-D-xylulose 5-phosphate contacts are provided by residues Gly-168, Ala-194–Gly-195, and Asn-216–Thr-217.

Belongs to the ThiG family. As to quaternary structure, homotetramer. Forms heterodimers with either ThiH or ThiS.

It localises to the cytoplasm. It carries out the reaction [ThiS sulfur-carrier protein]-C-terminal-Gly-aminoethanethioate + 2-iminoacetate + 1-deoxy-D-xylulose 5-phosphate = [ThiS sulfur-carrier protein]-C-terminal Gly-Gly + 2-[(2R,5Z)-2-carboxy-4-methylthiazol-5(2H)-ylidene]ethyl phosphate + 2 H2O + H(+). Its pathway is cofactor biosynthesis; thiamine diphosphate biosynthesis. In terms of biological role, catalyzes the rearrangement of 1-deoxy-D-xylulose 5-phosphate (DXP) to produce the thiazole phosphate moiety of thiamine. Sulfur is provided by the thiocarboxylate moiety of the carrier protein ThiS. In vitro, sulfur can be provided by H(2)S. The sequence is that of Thiazole synthase from Aquifex aeolicus (strain VF5).